The chain runs to 413 residues: MSFRDLRNFTEMMRALGYPRHISMENFRTPNFGLVSEVLLWLVKRYEPQTDIPSDIETEQDRVFFIKAIAQFMATKAHIKLNTKKLYQADGYAVKELLKITSVLYNAMKTKGMEGSNVGEEDISKFKFDLGSKIADLKAARQLASEITAKGASLYDLLGKEVELRELRTEAIARPLEINETEKVMRIAIKDLLAQVQKTKDLLNNVASDEANLEAKIEKRKLELERNRKRLQTLQSVRPAFMDEYEKVEEDLQKQYDVYLEKFRNLAYLEQQLEDHHRMEQERFEEAENTLRLMQNKLKEEEKRLLKSGSNDDSDIDIQEDDESDSELEDRRMSKPRTAMEVLMQGRPSKRIVGAMQGGDSDEDEDSEDSEIDMEDDEEDDDDLEDESIALSPAKPSRRIRKPEPLDESDNDF.

The stretch at 185–308 forms a coiled coil; it reads MRIAIKDLLA…KEEEKRLLKS (124 aa). Residues 303–413 are disordered; that stretch reads KRLLKSGSND…EPLDESDNDF (111 aa). Composition is skewed to acidic residues over residues 312-328 and 360-388; these read DDSD…DSEL and DSDE…EDES. A phosphoserine mark is found at serine 314, serine 324, and serine 326. Serine 409 bears the Phosphoserine mark.

This sequence belongs to the CLUAP1 family. As to quaternary structure, interacts with CLU/clusterin. Interacts with UBXN10; the interaction is direct. Expressed in all tissues tested including heart, kidney, skeletal muscle, eye, liver, ovary, oviduct, testes, lung and brain. Elevated levels in multiciliated cells such as the bronchioles of the lungs, ependymal cells of the brain and cells with a single primary cilia of heart and kidney.

It localises to the cell projection. The protein localises to the cilium. It is found in the nucleus. Functionally, required for cilia biogenesis. Appears to function within the multiple intraflagellar transport complex B (IFT-B). Key regulator of hedgehog signaling. The polypeptide is Clusterin-associated protein 1 (Cluap1) (Mus musculus (Mouse)).